Here is a 192-residue protein sequence, read N- to C-terminus: Large ribosomal subunit protein bL9 (192 aa).

Residues 173–192 (ALRPEDFFDPEADGLDENEA) form a disordered region. Residues 179 to 192 (FFDPEADGLDENEA) are compositionally biased toward acidic residues.

Belongs to the bacterial ribosomal protein bL9 family.

Its function is as follows. Binds to the 23S rRNA. In Rhizobium etli (strain ATCC 51251 / DSM 11541 / JCM 21823 / NBRC 15573 / CFN 42), this protein is Large ribosomal subunit protein bL9.